A 350-amino-acid polypeptide reads, in one-letter code: MRVTNRSLKGREGEIAVTAETLDDLWHLKYIIEKGDMVFALTRRKADSASDKLRPEKVEKVKVRLGIRVEELEFHKFANRLRIHGPIEHGMDTGSYHTLNVEIGTNISIIKEHWKNDQLQRIQDAEEAGKRPKVVIVAVEEGDADIGFVRHYGIEVYSHIRQSSGKRETGLRNEFFREIVEQLRHAVPEDASIVIAGPGFTKEDFLKYFNETESEMASKALTEDTSMIGMSGFQEVLRRGAVDRIMQESRIARESSLMEDLIREISMDGKAAYGFADVKNALGYGAVETLLIADETLREGREKGEDIDKLLMEVEQAQGKVVVFSTAFEPGEKLHKLGGIAALLRFKVTG.

This sequence belongs to the eukaryotic release factor 1 family. Pelota subfamily. Monomer. Requires a divalent metal cation as cofactor.

Its subcellular location is the cytoplasm. In terms of biological role, may function in recognizing stalled ribosomes, interact with stem-loop structures in stalled mRNA molecules, and effect endonucleolytic cleavage of the mRNA. May play a role in the release non-functional ribosomes and degradation of damaged mRNAs. Has endoribonuclease activity. This Methanosarcina mazei (strain ATCC BAA-159 / DSM 3647 / Goe1 / Go1 / JCM 11833 / OCM 88) (Methanosarcina frisia) protein is Protein pelota homolog.